Here is a 214-residue protein sequence, read N- to C-terminus: Phosphatidylcholine transfer protein (214 aa).

An N-acetylmethionine modification is found at M1. Residues 1–212 (MAGPAAHFSD…MVKACQNYHK (212 aa)) form the START domain. A 1,2-diacyl-sn-glycero-3-phosphocholine contacts are provided by Y72 and R78. Position 139 is a phosphoserine (S139). An a 1,2-diacyl-sn-glycero-3-phosphocholine-binding site is contributed by Q157.

In terms of assembly, interacts with ACOT13/THEM2.

Its subcellular location is the cytoplasm. Functionally, lipid transfer protein that promotes intermembrane transfer of phosphatidylcholines but no other phospholipids. Binds a single lipid molecule. May play a role in hepatocellular selection and transport of phosphatidylcholines during bile formation. The chain is Phosphatidylcholine transfer protein (Pctp) from Rattus norvegicus (Rat).